Reading from the N-terminus, the 168-residue chain is Protein archease (168 aa).

Alanine 2 bears the N-acetylalanine mark. Residues aspartate 39, aspartate 167, and isoleucine 168 each coordinate Ca(2+).

This sequence belongs to the archease family. As to quaternary structure, component of the tRNA-splicing ligase complex.

In terms of biological role, component of the tRNA-splicing ligase complex required to facilitate the enzymatic turnover of catalytic subunit RTCB. Together with DDX1, acts by facilitating the guanylylation of RTCB, a key intermediate step in tRNA ligation. In Mus musculus (Mouse), this protein is Protein archease (Zbtb8os).